A 229-amino-acid polypeptide reads, in one-letter code: Rab-like protein 2A (229 aa).

GTP contacts are provided by residues 28-35, 76-80, and 133-136; these read GDSAVGKS, DTAGQ, and NKID. The tract at residues 200 to 229 is disordered; sequence NLEQEEEDVPDQEQSGSIETPSEEVASPHS.

This sequence belongs to the small GTPase superfamily. Rab family. Interacts with IFT27, IFT81, IFT172, ATP6V1E1, HK1, LDHC, MAPRE1 and HSPA2.

Its function is as follows. Plays an essential role in male fertility, sperm intra-flagellar transport, and tail assembly. Binds, in a GTP-regulated manner, to a specific set of effector proteins including key proteins involved in cilia development and function and delivers them into the growing sperm tail. The sequence is that of Rab-like protein 2A (RABL2A) from Pongo abelii (Sumatran orangutan).